A 714-amino-acid chain; its full sequence is Probable serine/threonine-protein kinase At1g09600 (714 aa).

Residues 1–64 (MGCNCTKGTR…NVGFEERSND (64 aa)) form a disordered region. The N-myristoyl glycine moiety is linked to residue Gly2. A compositionally biased stretch (low complexity) spans 16-27 (VDNSNSIVSNVN). Basic residues predominate over residues 31–46 (RRSKPKKTPKKKKKSK). In terms of domain architecture, Protein kinase spans 163 to 447 (FEKLEKIGQG…TASALESEFF (285 aa)). ATP contacts are provided by residues 169–177 (IGQGTYSSV) and Lys192. Residue Asp287 is the Proton acceptor of the active site. Residues 471 to 498 (KAQEEEAKRKKDTSSKQNDSKQVSRESK) are compositionally biased toward basic and acidic residues. Disordered stretches follow at residues 471 to 579 (KAQE…RKEL) and 693 to 714 (VDKK…ANGR). Polar residues-rich tracts occupy residues 506–528 (NAES…NSDK) and 556–573 (GVSS…GSSR).

Belongs to the protein kinase superfamily. Ser/Thr protein kinase family.

This chain is Probable serine/threonine-protein kinase At1g09600, found in Arabidopsis thaliana (Mouse-ear cress).